A 283-amino-acid chain; its full sequence is MSHELLRQPKWRVIDQSHFGPLFDAKQSFAIDDALCTAVGAGQSDAVVRTWVHENTVVLGAADTKLPYIDEAISFLRQEGYRVVVRNSGGLAVVLDSGVLNISLIFPETKNTIAIEQGYEAMYALMAAMLASYGARVEAGEIVGSYCPGSYDLSIGGKKFAGISQRRVRGGVAVQIYLCVNGSGAARAELIRRFYELGRQGEKTKFAYPDVVPTVMASLSELLGCELSIDELLVALWRTLQSFGGELYSSALENGEWNWYEQYWARIVERNETALKGELLAGE.

The region spanning 42 to 248 (GQSDAVVRTW…TLQSFGGELY (207 aa)) is the BPL/LPL catalytic domain. C147 functions as the Acyl-thioester intermediate in the catalytic mechanism.

Belongs to the octanoyltransferase LipL family.

The catalysed reaction is N(6)-octanoyl-L-lysyl-[glycine-cleavage complex H protein] + L-lysyl-[lipoyl-carrier protein] = N(6)-octanoyl-L-lysyl-[lipoyl-carrier protein] + L-lysyl-[glycine-cleavage complex H protein]. It participates in protein modification; protein lipoylation via endogenous pathway; protein N(6)-(lipoyl)lysine from octanoyl-[acyl-carrier-protein]. In terms of biological role, catalyzes the amidotransfer (transamidation) of the octanoyl moiety from octanoyl-GcvH to the lipoyl domain of the E2 subunit of lipoate-dependent enzymes. This chain is Octanoyl-[GcvH]:protein N-octanoyltransferase, found in Geobacillus kaustophilus (strain HTA426).